The following is a 201-amino-acid chain: Putative amino-acid transporter Mb0498 (201 aa).

The next 5 helical transmembrane spans lie at 25–45, 57–77, 104–124, 133–153, and 169–189; these read VLVIVALCGIADGALIAAGVG, MTLVARFGGAAFLIGYALLAA, LVVTFLNPHVYLDTVVLIGAL, WFFGAGAWAASVVWFAVLGFS, and ILDALVAVTMIGVAVVVLVTS.

This sequence belongs to the LysE/ArgO transporter (TC 2.A.75) family.

The protein resides in the cell membrane. This is Putative amino-acid transporter Mb0498 from Mycobacterium bovis (strain ATCC BAA-935 / AF2122/97).